Consider the following 328-residue polypeptide: Transcription initiation factor IIB 4 (328 aa).

Composition is skewed to basic and acidic residues over residues methionine 1 to histidine 12 and arginine 21 to cysteine 32. Residues methionine 1–glutamate 47 are disordered. Residues glutamate 28–glutamate 58 form a TFIIB-type zinc finger. 4 residues coordinate Zn(2+): cysteine 32, cysteine 35, cysteine 50, and cysteine 53. Repeat copies occupy residues glycine 144–leucine 227 and serine 238–aspartate 319.

It belongs to the TFIIB family.

Stabilizes TBP binding to an archaeal box-A promoter. Also responsible for recruiting RNA polymerase II to the pre-initiation complex (DNA-TBP-TFIIB). The polypeptide is Transcription initiation factor IIB 4 (Halobacterium salinarum (strain ATCC 700922 / JCM 11081 / NRC-1) (Halobacterium halobium)).